The chain runs to 146 residues: Early E3 16 kDa glycoprotein (146 aa).

N-linked (GlcNAc...) asparagine; by host glycans are attached at residues N51 and N84.

E3 proteins seem to be dispensable for virus growth in tissue culture cells. They are potentially important for virus growth under special conditions; E3 region may help adenoviruses to evade the immune surveillance of the host. The polypeptide is Early E3 16 kDa glycoprotein (Human adenovirus B serotype 3 (HAdV-3)).